The following is a 625-amino-acid chain: Coagulation factor XI (625 aa).

The N-terminal stretch at 1 to 18 (MTLLYQMVHFALFASVAG) is a signal peptide. Apple domains follow at residues 20–103 (CVTT…SKQC), 110–193 (CSKD…LKSC), 200–283 (CIRD…LQHC), and 291–374 (CHSS…LRLC). 17 disulfide bridges follow: Cys20-Cys103, Cys46-Cys76, Cys50-Cys56, Cys110-Cys193, Cys136-Cys165, Cys140-Cys146, Cys200-Cys283, Cys226-Cys255, Cys230-Cys236, Cys291-Cys374, Cys317-Cys346, Cys321-Cys327, Cys380-Cys500, Cys416-Cys432, Cys514-Cys581, Cys545-Cys560, and Cys571-Cys599. Residues Asn90 and Asn126 are each glycosylated (N-linked (GlcNAc...) asparagine). One can recognise a Peptidase S1 domain in the interval 388-623 (IVGGTQSVHG…YVDWILEKTQ (236 aa)). The active-site Charge relay system is His431. N-linked (GlcNAc...) asparagine glycosylation occurs at Asn450. Asp480 serves as the catalytic Charge relay system. Asn491 carries an N-linked (GlcNAc...) asparagine glycan. 547–550 (AGYR) lines the heparin pocket. Catalysis depends on Ser575, which acts as the Charge relay system.

Belongs to the peptidase S1 family. Plasma kallikrein subfamily. Homodimer; disulfide-linked. After activation the heavy and light chains are also linked by a disulfide bond. Interacts (activated) with F9 (inactive and activated) in calcium-dependent manner. Forms a heterodimer with SERPINA5. In terms of processing, activated by factor XIIa (or XII), which cleaves each polypeptide after Arg-387 into the light chain, which contains the active site, and the heavy chain, which associates with high molecular weight (HMW) kininogen. Activated by F12 (activated); the presence of negatively charged surfaces accelerates activation. Activated by F2 (thrombin); the presence of negatively charged surfaces, such as polyphosphate and dextran sulfate, strongly accelerates activation. Autoactivated; the presence of negatively charged surfaces, such as polyphosphate and dextran sulfate, accelerates autoactivation and autolysis. N-glycosylated on both chains. N-glycosylated sites mainly consist of nonfucosylated sialylated biantennary (in high abundance) and/or triantennary (in low abundance) complex structures.

Its subcellular location is the secreted. It carries out the reaction Selective cleavage of Arg-|-Ala and Arg-|-Val bonds in factor IX to form factor IXa.. Its activity is regulated as follows. Inhibited by SERPINA5. Its function is as follows. Factor XI triggers the middle phase of the intrinsic pathway of blood coagulation by activating factor IX. This Bos taurus (Bovine) protein is Coagulation factor XI (F11).